Reading from the N-terminus, the 487-residue chain is Inosine-5'-monophosphate dehydrogenase (487 aa).

CBS domains follow at residues 93-149 (IVSD…NKTV) and 153-214 (MTPK…CKDE). NAD(+) is bound by residues Asp-248, 248–250 (DSS), and 298–300 (GIG). Positions 300 and 302 each coordinate K(+). IMP is bound at residue Ser-303. Cys-305 contacts K(+). Catalysis depends on Cys-305, which acts as the Thioimidate intermediate. Residues 338–340 (DGG), 361–362 (GS), and 385–389 (YRGMG) contribute to the IMP site. The active-site Proton acceptor is the Arg-401. Glu-415 is a binding site for IMP. K(+)-binding residues include Glu-469, Ser-470, and His-471.

Belongs to the IMPDH/GMPR family. Homotetramer. K(+) is required as a cofactor.

It carries out the reaction IMP + NAD(+) + H2O = XMP + NADH + H(+). It functions in the pathway purine metabolism; XMP biosynthesis via de novo pathway; XMP from IMP: step 1/1. With respect to regulation, mycophenolic acid (MPA) is a non-competitive inhibitor that prevents formation of the closed enzyme conformation by binding to the same site as the amobile flap. In contrast, mizoribine monophosphate (MZP) is a competitive inhibitor that induces the closed conformation. MPA is a potent inhibitor of mammalian IMPDHs but a poor inhibitor of the bacterial enzymes. MZP is a more potent inhibitor of bacterial IMPDH. In terms of biological role, catalyzes the conversion of inosine 5'-phosphate (IMP) to xanthosine 5'-phosphate (XMP), the first committed and rate-limiting step in the de novo synthesis of guanine nucleotides, and therefore plays an important role in the regulation of cell growth. The protein is Inosine-5'-monophosphate dehydrogenase of Pasteurella multocida (strain Pm70).